The sequence spans 480 residues: UDP-N-acetylmuramoylalanine--D-glutamate ligase (480 aa).

An ATP-binding site is contributed by 127–133 (GTNGKTT).

Belongs to the MurCDEF family.

The protein resides in the cytoplasm. The enzyme catalyses UDP-N-acetyl-alpha-D-muramoyl-L-alanine + D-glutamate + ATP = UDP-N-acetyl-alpha-D-muramoyl-L-alanyl-D-glutamate + ADP + phosphate + H(+). Its pathway is cell wall biogenesis; peptidoglycan biosynthesis. Its function is as follows. Cell wall formation. Catalyzes the addition of glutamate to the nucleotide precursor UDP-N-acetylmuramoyl-L-alanine (UMA). This is UDP-N-acetylmuramoylalanine--D-glutamate ligase from Tropheryma whipplei (strain Twist) (Whipple's bacillus).